The sequence spans 1256 residues: Putative protein DDB_G0292252 (1256 aa).

Disordered regions lie at residues 1–53, 145–243, 898–951, and 1069–1136; these read MSDD…NNNN, LLNG…SISR, EQQQ…PVET, and SHPT…ATIS. A compositionally biased stretch (low complexity) spans 147–214; that stretch reads NGNNSNNNSN…NGNNINTSNG (68 aa). A compositionally biased stretch (polar residues) spans 222–243; it reads QTESTEQDFTSTSQNSTPSISR. Composition is skewed to low complexity over residues 898–916 and 925–942; these read EQQQ…SNNE and TTAA…TTTT. Over residues 1069–1079 the composition is skewed to polar residues; sequence SHPTIQSTSSP. Over residues 1080-1136 the composition is skewed to low complexity; it reads STSSSNNNNSTTTATNNNGNNGNNNNGNGNNNNNNNNNNNNNNNNNNNNNNGPATIS.

This is Putative protein DDB_G0292252 from Dictyostelium discoideum (Social amoeba).